A 312-amino-acid polypeptide reads, in one-letter code: Olfactory receptor 1493 (312 aa).

Over 1 to 23 the chain is Extracellular; sequence MNNKTVITHFLLLGLPIPPEHQQ. N3 carries an N-linked (GlcNAc...) asparagine glycan. A helical membrane pass occupies residues 24 to 48; sequence LFFALFLIMYLTTFLGNLLIVVLVQ. At 49–55 the chain is on the cytoplasmic side; the sequence is LDSHLHT. The helical transmembrane segment at 56–77 threads the bilayer; it reads PMYLFLSNLSFSDLCFSSVTML. At 78-98 the chain is on the extracellular side; that stretch reads KLLQNIQSQVPSISYAGCLTQ. C95 and C187 are oxidised to a cystine. A helical transmembrane segment spans residues 99–118; it reads IFFFLLFGYLGNFLLVAMAY. The Cytoplasmic portion of the chain corresponds to 119–137; sequence DRYVAICFPLHYTNIMSHK. Residues 138-156 traverse the membrane as a helical segment; it reads LCTCLLLVFWIMTSSHAMM. Residues 157–194 lie on the Extracellular side of the membrane; it reads HTLLAARLSFCENNVLLNFFCDLFVLLKLACSDTYVNE. The helical transmembrane segment at 195 to 217 threads the bilayer; sequence LMIHIMGVIIIVIPFVLIVISYA. The Cytoplasmic portion of the chain corresponds to 218–234; it reads KIISSILKVPSTQSIHK. A helical membrane pass occupies residues 235-258; sequence VFSTCGSHLSVVSLFYGTIIGLYL. Residues 259 to 270 lie on the Extracellular side of the membrane; that stretch reads CPSGDNFSLKGS. A helical membrane pass occupies residues 271–290; sequence AMAMMYTVVTPMLNPFIYSL. The Cytoplasmic portion of the chain corresponds to 291–312; the sequence is RNRDMKQALIRVTCSKKISLPW.

It belongs to the G-protein coupled receptor 1 family. In terms of tissue distribution, olfactory epithelium.

The protein resides in the cell membrane. Functionally, odorant receptor. This is Olfactory receptor 1493 (Olr1493) from Rattus norvegicus (Rat).